Reading from the N-terminus, the 287-residue chain is tRNA (guanine(9)-N1)-methyltransferase (287 aa).

The interval 1-27 (MSDTSDLVDGKWQRLPPVPEGMSKSQW) is disordered. An SAM-dependent MTase TRM10-type domain is found at 79–272 (EPRVNRDQVA…SVIPSRKLDP (194 aa)). S-adenosyl-L-methionine contacts are provided by residues 179–180 (LT), Gly-199, 203–207 (DKNRH), Cys-211, Leu-225, and 237–239 (KVL). The active-site Proton acceptor is the Asp-203. Residues 268-278 (RKLDPVKEKEQ) are compositionally biased toward basic and acidic residues. Positions 268–287 (RKLDPVKEKEQQQQQQQQQQ) are disordered.

It belongs to the class IV-like SAM-binding methyltransferase superfamily. TRM10 family. Monomer.

It is found in the cytoplasm. The protein localises to the nucleus. It carries out the reaction guanosine(9) in tRNA + S-adenosyl-L-methionine = N(1)-methylguanosine(9) in tRNA + S-adenosyl-L-homocysteine + H(+). Functionally, S-adenosyl-L-methionine-dependent guanine N(1)-methyltransferase that catalyzes the formation of N(1)-methylguanine at position 9 (m1G9) in cytoplasmic tRNA. This chain is tRNA (guanine(9)-N1)-methyltransferase, found in Candida glabrata (strain ATCC 2001 / BCRC 20586 / JCM 3761 / NBRC 0622 / NRRL Y-65 / CBS 138) (Yeast).